The primary structure comprises 432 residues: Trigger factor (432 aa).

In terms of domain architecture, PPIase FKBP-type spans 161 to 246; it reads EDRVTIDFTG…LKKVEERELP (86 aa).

Belongs to the FKBP-type PPIase family. Tig subfamily.

It localises to the cytoplasm. It catalyses the reaction [protein]-peptidylproline (omega=180) = [protein]-peptidylproline (omega=0). Functionally, involved in protein export. Acts as a chaperone by maintaining the newly synthesized protein in an open conformation. Functions as a peptidyl-prolyl cis-trans isomerase. This chain is Trigger factor, found in Citrobacter koseri (strain ATCC BAA-895 / CDC 4225-83 / SGSC4696).